The primary structure comprises 535 residues: Dual specificity mitogen-activated protein kinase kinase 7 (535 aa).

Ala2 carries the post-translational modification N-acetylalanine. Residues 2–30 (AASSLEQKLSRLEAKLKQENREARRRIDL) adopt a coiled-coil conformation. The segment at 37-73 (QRPRPIIVITLSPAPAPSQRAALQLPLANDGGSRSPS) is d domain. The segment at 63-93 (LANDGGSRSPSSESSPQHPTPPTRPRHMLGL) is disordered. A compositionally biased stretch (low complexity) spans 69–79 (SRSPSSESSPQ). Residues 136–396 (LENLGEMGSG…YNKLLEHSFI (261 aa)) enclose the Protein kinase domain. Residues 142–150 (MGSGTCGQV) and Lys165 each bind ATP. Asp259 acts as the Proton acceptor in catalysis. Ser287 carries the post-translational modification Phosphoserine; by MAP3K. Thr291 bears the Phosphothreonine; by MAP3K mark. Residues 393-416 (HSFIKHYEILEVDVASWFKDVMAK) form a DVD domain region. Ser427 is modified (phosphoserine).

Belongs to the protein kinase superfamily. STE Ser/Thr protein kinase family. MAP kinase kinase subfamily. Interacts with RASSF7, the interaction promotes phosphorylation. Interacts with VRK2. Interacts (via its D domain) with its substrates MAPK8/JNK1, MAPK9/JNK2 and MAPK10/JNK3. Interacts (via its DVD domain) with MAP3Ks activators like MAP3K5/ASK1 and MAP3K1/MEKK1. Interacts with SH3RF1, MAPK8IP1/JIP1, MAPK8IP2/JIP2 and MAPK8IP3/JIP3 scaffold proteins. Found in a complex with SH3RF1, RAC1, MAP3K11/MLK3, MAPK8IP1/JIP1 and MAPK8/JNK1. Found in a complex with SH3RF1, RAC2, MAP3K7/TAK1, MAPK8IP1/JIP1, MAPK8/JNK1 and MAPK9/JNK2. Mg(2+) serves as cofactor. In terms of processing, activated by phosphorylation on Ser-287 and Thr-291 by MAP kinase kinase kinases (MAP3Ks). Expressed at high levels in brain, lung, liver, skeletal muscle, kidney, and testis and at lower levels in the heart and spleen.

The protein localises to the nucleus. Its subcellular location is the cytoplasm. It catalyses the reaction L-seryl-[protein] + ATP = O-phospho-L-seryl-[protein] + ADP + H(+). The catalysed reaction is L-threonyl-[protein] + ATP = O-phospho-L-threonyl-[protein] + ADP + H(+). The enzyme catalyses L-tyrosyl-[protein] + ATP = O-phospho-L-tyrosyl-[protein] + ADP + H(+). Activated by phosphorylation by specific MAP kinase kinase kinases such as MAP3K1/MEKK1, MAP3K3/MEKK3, MAP3K11/MLK3 and MAP3K12/DLK. Isoforms 3 and 4 have lower basal activity but a higher level of inducible activation, than isoforms 2, 6, 7 and 8. Dual specificity protein kinase which acts as an essential component of the MAP kinase signal transduction pathway. Essential component of the stress-activated protein kinase/c-Jun N-terminal kinase (SAP/JNK) signaling pathway. With MAP2K4/MKK4, is the one of the only known kinase to directly activate the stress-activated protein kinase/c-Jun N-terminal kinases MAPK8/JNK1, MAPK9/JNK2 and MAPK10/JNK3. MAP2K4/MKK4 and MAP2K7/MKK7 both activate the JNKs by phosphorylation, but they differ in their preference for the phosphorylation site in the Thr-Pro-Tyr motif. MAP2K4/MKK4 shows preference for phosphorylation of the Tyr residue and MAP2K7/MKK7 for the Thr residue. The monophosphorylation of JNKs on the Thr residue is sufficient to increase JNK activity indicating that MAP2K7/MKK7 is important to trigger JNK activity, while the additional phosphorylation of the Tyr residue by MAP2K4/MKK4 ensures optimal JNK activation. Has a specific role in JNK signal transduction pathway activated by pro-inflammatory cytokines. The MKK/JNK signaling pathway is also involved in mitochondrial death signaling pathway, including the release cytochrome c, leading to apoptosis. Part of a non-canonical MAPK signaling pathway, composed of the upstream MAP3K12 kinase and downstream MAP kinases MAPK1/ERK2 and MAPK3/ERK1, that enhances the AP-1-mediated transcription of APP in response to APOE. The chain is Dual specificity mitogen-activated protein kinase kinase 7 from Mus musculus (Mouse).